Reading from the N-terminus, the 199-residue chain is Recombination protein RecR (199 aa).

A C4-type zinc finger spans residues C58 to C73. Residues A81–P176 enclose the Toprim domain.

It belongs to the RecR family.

Functionally, may play a role in DNA repair. It seems to be involved in an RecBC-independent recombinational process of DNA repair. It may act with RecF and RecO. This Heliobacterium modesticaldum (strain ATCC 51547 / Ice1) protein is Recombination protein RecR.